The following is a 304-amino-acid chain: N-acetyl-D-glucosamine kinase (304 aa).

Residues 4–11 and 133–140 each bind ATP; these read GFDIGGTK and GFGGGLIF. 4 residues coordinate Zn(2+): His-157, Cys-178, Cys-180, and Cys-185.

The protein belongs to the ROK (NagC/XylR) family. NagK subfamily.

It catalyses the reaction N-acetyl-D-glucosamine + ATP = N-acetyl-D-glucosamine 6-phosphate + ADP + H(+). Its pathway is cell wall biogenesis; peptidoglycan recycling. Its function is as follows. Catalyzes the phosphorylation of N-acetyl-D-glucosamine (GlcNAc) derived from cell-wall degradation, yielding GlcNAc-6-P. This is N-acetyl-D-glucosamine kinase from Pasteurella multocida (strain Pm70).